The primary structure comprises 414 residues: Gamma-glutamyl phosphate reductase (414 aa).

It belongs to the gamma-glutamyl phosphate reductase family.

It localises to the cytoplasm. It catalyses the reaction L-glutamate 5-semialdehyde + phosphate + NADP(+) = L-glutamyl 5-phosphate + NADPH + H(+). It functions in the pathway amino-acid biosynthesis; L-proline biosynthesis; L-glutamate 5-semialdehyde from L-glutamate: step 2/2. Functionally, catalyzes the NADPH-dependent reduction of L-glutamate 5-phosphate into L-glutamate 5-semialdehyde and phosphate. The product spontaneously undergoes cyclization to form 1-pyrroline-5-carboxylate. The sequence is that of Gamma-glutamyl phosphate reductase from Xanthomonas campestris pv. campestris (strain ATCC 33913 / DSM 3586 / NCPPB 528 / LMG 568 / P 25).